Here is a 100-residue protein sequence, read N- to C-terminus: Small ribosomal subunit protein bS20 (100 aa).

The interval 79–100 (AAHQKSRLSAAVKQAIEPAPST) is disordered.

It belongs to the bacterial ribosomal protein bS20 family.

Functionally, binds directly to 16S ribosomal RNA. The chain is Small ribosomal subunit protein bS20 from Prochlorococcus marinus (strain MIT 9303).